A 180-amino-acid chain; its full sequence is Pro-glucagon (180 aa).

Positions 1–20 are cleaved as a signal peptide; that stretch reads MKSVYFVAGLFIMLAQGSWQ. The disordered stretch occupies residues 23 to 58; the sequence is LQDTEEKPRSVSASQTDMLDDPDQMNEDKRHSQGTF. Serine 54 is subject to Phosphoserine. A propeptide spanning residues 84-89 is cleaved from the precursor; sequence NRNNIA. A phosphoserine mark is found at serine 105 and serine 108. At arginine 127 the chain carries Arginine amide. Positions 131–145 are excised as a propeptide; that stretch reads DFPEEVAIVEELGRR. Residues serine 150 and serine 152 each carry the phosphoserine modification.

The protein belongs to the glucagon family. In terms of processing, proglucagon is post-translationally processed in a tissue-specific manner in pancreatic A cells and intestinal L cells. In pancreatic A cells, the major bioactive hormone is glucagon cleaved by PCSK2/PC2. In the intestinal L cells PCSK1/PC1 liberates GLP-1, GLP-2, glicentin and oxyntomodulin. GLP-1 is further N-terminally truncated by post-translational processing in the intestinal L cells resulting in GLP-1(7-37) GLP-1-(7-36)amide. The C-terminal amidation is neither important for the metabolism of GLP-1 nor for its effects on the endocrine pancreas.

It localises to the secreted. Plays a key role in glucose metabolism and homeostasis. Regulates blood glucose by increasing gluconeogenesis and decreasing glycolysis. A counterregulatory hormone of insulin, raises plasma glucose levels in response to insulin-induced hypoglycemia. Plays an important role in initiating and maintaining hyperglycemic conditions in diabetes. Its function is as follows. Potent stimulator of glucose-dependent insulin release. Also stimulates insulin release in response to IL6. Plays important roles on gastric motility and the suppression of plasma glucagon levels. May be involved in the suppression of satiety and stimulation of glucose disposal in peripheral tissues, independent of the actions of insulin. Has growth-promoting activities on intestinal epithelium. May also regulate the hypothalamic pituitary axis (HPA) via effects on LH, TSH, CRH, oxytocin, and vasopressin secretion. Increases islet mass through stimulation of islet neogenesis and pancreatic beta cell proliferation. Inhibits beta cell apoptosis. In terms of biological role, stimulates intestinal growth and up-regulates villus height in the small intestine, concomitant with increased crypt cell proliferation and decreased enterocyte apoptosis. The gastrointestinal tract, from the stomach to the colon is the principal target for GLP-2 action. Plays a key role in nutrient homeostasis, enhancing nutrient assimilation through enhanced gastrointestinal function, as well as increasing nutrient disposal. Stimulates intestinal glucose transport and decreases mucosal permeability. Functionally, significantly reduces food intake. Inhibits gastric emptying in humans. Suppression of gastric emptying may lead to increased gastric distension, which may contribute to satiety by causing a sensation of fullness. May modulate gastric acid secretion and the gastro-pyloro-duodenal activity. May play an important role in intestinal mucosal growth in the early period of life. This Cavia porcellus (Guinea pig) protein is Pro-glucagon (GCG).